Reading from the N-terminus, the 233-residue chain is UPF0758 protein SRU_2338 (233 aa).

Residues 110–232 (QVTCPADVAD…HTSLAERGVI (123 aa)) enclose the MPN domain. Zn(2+) contacts are provided by histidine 181, histidine 183, and aspartate 194. The short motif at 181–194 (HNHPSGNPEPSRED) is the JAMM motif element.

It belongs to the UPF0758 family.

This Salinibacter ruber (strain DSM 13855 / M31) protein is UPF0758 protein SRU_2338.